A 484-amino-acid polypeptide reads, in one-letter code: UDP-N-acetylmuramoyl-L-alanyl-D-glutamate--2,6-diaminopimelate ligase (484 aa).

110–116 (GTNGKTT) provides a ligand contact to ATP. UDP-N-acetyl-alpha-D-muramoyl-L-alanyl-D-glutamate is bound by residues 152 to 153 (TT), Ser179, and Arg187. Lys219 is subject to N6-carboxylysine. Meso-2,6-diaminopimelate-binding positions include Arg381, 405–408 (DNPR), Gly455, and Glu459. The Meso-diaminopimelate recognition motif signature appears at 405 to 408 (DNPR).

It belongs to the MurCDEF family. MurE subfamily. The cofactor is Mg(2+). Carboxylation is probably crucial for Mg(2+) binding and, consequently, for the gamma-phosphate positioning of ATP.

It localises to the cytoplasm. The catalysed reaction is UDP-N-acetyl-alpha-D-muramoyl-L-alanyl-D-glutamate + meso-2,6-diaminopimelate + ATP = UDP-N-acetyl-alpha-D-muramoyl-L-alanyl-gamma-D-glutamyl-meso-2,6-diaminopimelate + ADP + phosphate + H(+). The protein operates within cell wall biogenesis; peptidoglycan biosynthesis. Functionally, catalyzes the addition of meso-diaminopimelic acid to the nucleotide precursor UDP-N-acetylmuramoyl-L-alanyl-D-glutamate (UMAG) in the biosynthesis of bacterial cell-wall peptidoglycan. The polypeptide is UDP-N-acetylmuramoyl-L-alanyl-D-glutamate--2,6-diaminopimelate ligase (Clostridium perfringens (strain 13 / Type A)).